Consider the following 569-residue polypeptide: Matrix metalloproteinase-21 (569 aa).

A signal peptide spans 1-24 (MLAASIFRPTLLLCWLAAPWPTQP). Positions 25 to 144 (ESLFHSRDRS…GPPPRARSRR (120 aa)) are excised as a propeptide. Positions 115-122 (PRCGVPDM) match the Cysteine switch motif. The segment at 115 to 166 (PRCGVPDMRPPPPSAPPSPPGPPPRARSRRSPRAPLSLSRRGWQPRGYPDGG) is disordered. A Zn(2+)-binding site is contributed by C117. Residues 122-139 (MRPPPPSAPPSPPGPPPR) are compositionally biased toward pro residues. Over residues 147–156 (RAPLSLSRRG) the composition is skewed to low complexity. A Zn(2+)-binding site is contributed by H283. E284 is a catalytic residue. 2 residues coordinate Zn(2+): H287 and H293. A disulfide bridge connects residues C329 and C560. Hemopexin repeat units follow at residues 330–389 (EGSF…WPGI), 391–447 (THNI…FPGI), 448–496 (PSPL…FPAV), and 503–559 (FRNI…WFDV). N372 carries an N-linked (GlcNAc...) asparagine glycan.

It belongs to the peptidase M10A family. Requires Zn(2+) as cofactor. It depends on Ca(2+) as a cofactor. The precursor is cleaved by a furin endopeptidase. In terms of tissue distribution, identified in fetal brain, kidney and liver. In adult tissues found primarily in ovary, kidney, liver, lung, placenta, brain and peripheral blood leukocytes. Expressed as well in various cancer cell lines.

It localises to the secreted. In terms of biological role, plays a specialized role in the generation of left-right asymmetry during embryogenesis. May act as a negative regulator of the NOTCH-signaling pathway. Cleaves alpha-1-antitrypsin. The chain is Matrix metalloproteinase-21 (MMP21) from Homo sapiens (Human).